A 107-amino-acid chain; its full sequence is Serine-rich and transmembrane domain-containing protein 1 (107 aa).

Residues 43–63 traverse the membrane as a helical segment; that stretch reads IYVSIFLSLLAFLLLLLIIAL.

It is found in the membrane. This is Serine-rich and transmembrane domain-containing protein 1 (Sertm1) from Mus musculus (Mouse).